The following is a 297-amino-acid chain: Mycothiol acetyltransferase (297 aa).

N-acetyltransferase domains follow at residues 7–156 (VFSD…VTIR) and 153–297 (VTIR…PPPH). Glu-38 lines the 1D-myo-inositol 2-(L-cysteinylamino)-2-deoxy-alpha-D-glucopyranoside pocket. 79–81 (VVV) lines the acetyl-CoA pocket. Residues Glu-180, Lys-219, and Glu-227 each coordinate 1D-myo-inositol 2-(L-cysteinylamino)-2-deoxy-alpha-D-glucopyranoside. Acetyl-CoA is bound by residues 231–233 (VGV) and 238–244 (QGLGLGR). A 1D-myo-inositol 2-(L-cysteinylamino)-2-deoxy-alpha-D-glucopyranoside-binding site is contributed by Tyr-265. Residue 270–275 (NRPALR) participates in acetyl-CoA binding.

It belongs to the acetyltransferase family. MshD subfamily. As to quaternary structure, monomer.

The enzyme catalyses 1D-myo-inositol 2-(L-cysteinylamino)-2-deoxy-alpha-D-glucopyranoside + acetyl-CoA = mycothiol + CoA + H(+). In terms of biological role, catalyzes the transfer of acetyl from acetyl-CoA to desacetylmycothiol (Cys-GlcN-Ins) to form mycothiol. This is Mycothiol acetyltransferase from Thermomonospora curvata (strain ATCC 19995 / DSM 43183 / JCM 3096 / KCTC 9072 / NBRC 15933 / NCIMB 10081 / Henssen B9).